The following is a 387-amino-acid chain: Patatin-01 (387 aa).

An N-terminal signal peptide occupies residues 1–23 (MATTKSFLILSVMILATTSSTFA). Residues 32–230 (LSIDGGGIKG…TVADPALLSV (199 aa)) enclose the PNPLA domain. Residues 36-41 (GGGIKG) carry the GXGXXG motif. A GXSXG motif is present at residues 75–79 (GTSTG). Serine 77 serves as the catalytic Nucleophile. N-linked (GlcNAc...) asparagine glycosylation occurs at asparagine 115. Aspartate 216 acts as the Proton acceptor in catalysis. The DGA/G motif lies at 216 to 218 (DGA). Positions 361–385 (ETYEEALKRFAKLLSDRKKLRANKA) form a coiled coil.

It belongs to the patatin family. As to expression, tuber.

Its subcellular location is the vacuole. Functionally, probable lipolytic acyl hydrolase (LAH), an activity which is thought to be involved in the response of tubers to pathogens. This is Patatin-01 from Solanum tuberosum (Potato).